The primary structure comprises 336 residues: Formimidoylglutamase (336 aa).

A compositionally biased stretch (polar residues) spans 1–10 (MNPNFTTEHT). A disordered region spans residues 1 to 22 (MNPNFTTEHTWQGRHDPEDGQA). Residues 11–22 (WQGRHDPEDGQA) are compositionally biased toward basic and acidic residues. Residues histidine 127, aspartate 157, histidine 159, aspartate 161, aspartate 254, and aspartate 256 each coordinate Mn(2+).

The protein belongs to the arginase family. Mn(2+) is required as a cofactor.

It carries out the reaction N-formimidoyl-L-glutamate + H2O = formamide + L-glutamate. It participates in amino-acid degradation; L-histidine degradation into L-glutamate; L-glutamate from N-formimidoyl-L-glutamate (hydrolase route): step 1/1. Its function is as follows. Catalyzes the conversion of N-formimidoyl-L-glutamate to L-glutamate and formamide. This Vibrio cholerae serotype O1 (strain ATCC 39541 / Classical Ogawa 395 / O395) protein is Formimidoylglutamase.